A 2272-amino-acid polypeptide reads, in one-letter code: Voltage-dependent R-type calcium channel subunit alpha-1E (2272 aa).

Residues 1 to 40 (MARFGEAVVVGRPGSGDGDSDQSRNRQGTPVPASGPAAAY) form a disordered region. The Cytoplasmic segment spans residues 1-90 (MARFGEAVVV…KYAKKLIDWP (90 aa)). A phosphoserine mark is found at Ser-15 and Ser-20. One copy of the I repeat lies at 77 to 355 (NIVRKYAKKL…LVLGVLSGEF (279 aa)). The helical transmembrane segment at 91–109 (PFEYMILATIIANCIVLAL) threads the bilayer. Over 110-128 (EQHLPEDDKTPMSRRLEKT) the chain is Extracellular. A helical transmembrane segment spans residues 129–147 (EPYFIGIFCFEAGIKIVAL). Topologically, residues 148–159 (GFIFHKGSYLRN) are cytoplasmic. The helical transmembrane segment at 160–174 (GWNVMDFIVVLSGIL) threads the bilayer. At 175-186 (ATAGTHFNTHVD) the chain is on the extracellular side. The chain crosses the membrane as a helical span at residues 187 to 206 (LRALRAVRVLRPLKLVSGIP). At 207–224 (SLQIVLKSIMKAMVPLLQ) the chain is on the cytoplasmic side. A helical membrane pass occupies residues 225 to 245 (IGLLLFFAILMFAIIGLEFYS). Over 246–327 (GKLHRACFMN…NTNDALGATW (82 aa)) the chain is Extracellular. Residue Asn-255 is glycosylated (N-linked (GlcNAc...) asparagine). A helical membrane pass occupies residues 328 to 351 (NWLYFIPLIIIGSFFVLNLVLGVL). Residues 352–477 (SGEFAKERER…ISIRHMVKSQ (126 aa)) lie on the Cytoplasmic side of the membrane. Positions 375 to 392 (QQIERELNGYRAWIDKAE) are binding to the beta subunit. Asp-427 is a Ca(2+) binding site. At Ser-428 the chain carries Phosphoserine. Positions 429, 431, 433, and 438 each coordinate Ca(2+). Thr-441 is modified (phosphothreonine). The stretch at 463 to 707 (ERLLRISIRH…VFLAIAVDNL (245 aa)) is one II repeat. Residues 478-497 (VFYWIVLSVVALNTACVAIV) form a helical membrane-spanning segment. Topologically, residues 498–510 (HHNQPQWLTHLLY) are extracellular. A helical membrane pass occupies residues 511 to 530 (YAEFLFLGLFLLEMSLKMYG). The Cytoplasmic segment spans residues 531 to 539 (MGPRLYFHS). Residues 540-558 (SFNCFDFGVTVGSIFEVVW) traverse the membrane as a helical segment. Residues 559–568 (AIFRPGTSFG) lie on the Extracellular side of the membrane. Residues 569–587 (ISVLRALRLLRIFKITKYW) traverse the membrane as a helical segment. At 588–606 (ASLRNLVVSLMSSMKSIIS) the chain is on the cytoplasmic side. The chain crosses the membrane as a helical span at residues 607-626 (LLFLLFLFIVVFALLGMQLF). Topologically, residues 627-679 (GGRFNFNDGTPSANFDTFPAAIMTVFQILTGEDWNEVMYNGIRSQGGVSSGMW) are extracellular. Residues 680–704 (SAIYFIVLTLFGNYTLLNVFLAIAV) traverse the membrane as a helical segment. The Cytoplasmic portion of the chain corresponds to 705–1150 (DNLANAQELT…TTNPIRRACH (446 aa)). Residues 730 to 777 (LQKAKEVSPMSAPNMPSIERDRRRRHHMSMWEPRSSHLRERRRRHHMS) are disordered. A phosphoserine mark is found at Ser-737, Ser-746, Ser-794, Ser-816, and Ser-856. Disordered regions lie at residues 854 to 994 (GGSL…VPRG) and 1091 to 1127 (SNKT…RETG). The span at 914 to 927 (RHRQSQRRSRHRRV) shows a compositional bias: basic residues. Low complexity predominate over residues 934-946 (SASASRSRSASQE). The residue at position 948 (Ser-948) is a Phosphoserine. 2 stretches are compositionally biased toward basic and acidic residues: residues 956 to 985 (EGEK…DLRR) and 1094 to 1105 (TDGEASPLKEAE). Residue Ser-1099 is modified to Phosphoserine. The stretch at 1143 to 1429 (NPIRRACHYI…IFVALIIITF (287 aa)) is one III repeat. Residues 1151–1167 (YIVNLRYFEMCILLVIA) form a helical membrane-spanning segment. Over 1168–1191 (ASSIALAAEDPVLTNSERNKVLRY) the chain is Extracellular. Residues 1192-1211 (FDYVFTGVFTFEMVIKMIDQ) traverse the membrane as a helical segment. The Cytoplasmic segment spans residues 1212 to 1219 (GLILQDGS). Residues 1220–1242 (YFRDLWNILDFVVVVGALVAFAL) form a helical membrane-spanning segment. The Extracellular segment spans residues 1243–1256 (ANALGTNKGRDIKT). The helical transmembrane segment at 1257-1274 (IKSLRVLRVLRPLKTIKR) threads the bilayer. Residues 1275–1293 (LPKLKAVFDCVVTSLKNVF) are Cytoplasmic-facing. Residues 1294–1313 (NILIVYKLFMFIFAVIAVQL) traverse the membrane as a helical segment. Residues 1314 to 1400 (FKGKFFYCTD…DRGPSRSNRM (87 aa)) are Extracellular-facing. Residues 1401–1424 (EMSIFYVVYFVVFPFFFVNIFVAL) traverse the membrane as a helical segment. Over 1425–1481 (IIITFQEQGDKMMEECSLEKNERACIDFAISAKPLTRYMPQNRHTFQYRVWHFVVSP) the chain is Cytoplasmic. One copy of the IV repeat lies at 1466–1729 (NRHTFQYRVW…LFVAVIMDNF (264 aa)). A helical transmembrane segment spans residues 1482–1500 (SFEYTIMAMIALNTVVLMM). The Extracellular segment spans residues 1501-1515 (KYYTAPCTYELALKY). Residues 1516-1535 (LNIAFTMVFSLECVLKVIAF) traverse the membrane as a helical segment. Over 1536 to 1543 (GFLNYFRD) the chain is Cytoplasmic. The helical transmembrane segment at 1544 to 1562 (TWNIFDFITVIGSITEIIL) threads the bilayer. Residues 1563–1573 (TDSKLVNTSGF) lie on the Extracellular side of the membrane. Asn-1569 carries N-linked (GlcNAc...) asparagine glycosylation. Residues 1574–1592 (NMSFLKLFRAARLIKLLRQ) traverse the membrane as a helical segment. The Cytoplasmic segment spans residues 1593–1611 (GYTIRILLWTFVQSFKALP). The chain crosses the membrane as a helical span at residues 1612–1631 (YVCLLIAMLFFIYAIIGMQV). At 1632 to 1700 (FGNIKLDEES…QNESERCGTD (69 aa)) the chain is on the extracellular side. An N-linked (GlcNAc...) asparagine glycan is attached at Asn-1692. The chain crosses the membrane as a helical span at residues 1701-1726 (LAYVYFVSFIFFCSFLMLNLFVAVIM). The Cytoplasmic segment spans residues 1727 to 2272 (DNFEYLTRDS…LSDTEEDDKC (546 aa)). Positions 1742–1777 (HHLDEFVRVWAEYDRAACGRIHYTEMYEMLTLMSPP) constitute an EF-hand domain. Positions 1755, 1761, and 1766 each coordinate Ca(2+). The disordered stretch occupies residues 2021–2186 (SAHRLNSDSG…QQGQHPSPQH (166 aa)). Residues 2025-2045 (LNSDSGHKSDTHRSGGRERGR) are compositionally biased toward basic and acidic residues. Phosphoserine is present on residues Ser-2054 and Ser-2073. Basic and acidic residues predominate over residues 2061–2078 (NSEERGTQADWESPERRQ). A compositionally biased stretch (low complexity) spans 2097 to 2112 (SLSESSIPSISDTSTP). Residues 2155–2174 (LASQALESNSACLTESSNSL) are compositionally biased toward polar residues. A compositionally biased stretch (low complexity) spans 2175–2186 (HPQQGQHPSPQH).

This sequence belongs to the calcium channel alpha-1 subunit (TC 1.A.1.11) family. CACNA1E subfamily. As to quaternary structure, interacts with EFHC1. Voltage-dependent calcium channels are multisubunit complexes, consisting of alpha-1, alpha-2, beta and delta subunits in a 1:1:1:1 ratio. The channel activity is directed by the pore-forming and voltage-sensitive alpha-1 subunit. In many cases, this subunit is sufficient to generate voltage-sensitive calcium channel activity. The auxiliary subunits beta and alpha-2/delta linked by a disulfide bridge regulate the channel activity. As to expression, expressed in neuronal tissues, retina, spleen, and pancreatic islet cells.

It is found in the membrane. The catalysed reaction is Ca(2+)(in) = Ca(2+)(out). Functionally, voltage-sensitive calcium channels (VSCC) mediate the entry of calcium ions into excitable cells and are also involved in a variety of calcium-dependent processes, including muscle contraction, hormone or neurotransmitter release, gene expression, cell motility, cell division and cell death. The isoform alpha-1E gives rise to R-type calcium currents. R-type calcium channels belong to the 'high-voltage activated' (HVA) group and are blocked by nickel. They are however insensitive to dihydropyridines (DHP). Calcium channels containing alpha-1E subunit could be involved in the modulation of firing patterns of neurons which is important for information processing. This chain is Voltage-dependent R-type calcium channel subunit alpha-1E (Cacna1e), found in Mus musculus (Mouse).